The chain runs to 159 residues: Small ribosomal subunit protein uS9 (159 aa).

This sequence belongs to the universal ribosomal protein uS9 family.

This chain is Small ribosomal subunit protein uS9, found in Rickettsia africae (strain ESF-5).